The primary structure comprises 400 residues: Elongation factor Tu 2 (400 aa).

Residues 10–209 (KPHLNIGTIG…AVDSYIPLPQ (200 aa)) enclose the tr-type G domain. The tract at residues 19-26 (GHIDHGKT) is G1. GTP is bound at residue 19–26 (GHIDHGKT). Residue threonine 26 coordinates Mg(2+). The interval 60–64 (GITIN) is G2. The interval 81-84 (DCPG) is G3. Residues 81–85 (DCPGH) and 136–139 (NKID) each bind GTP. The interval 136 to 139 (NKID) is G4. Residues 174–176 (SAL) form a G5 region.

The protein belongs to the TRAFAC class translation factor GTPase superfamily. Classic translation factor GTPase family. EF-Tu/EF-1A subfamily. As to quaternary structure, monomer.

The protein resides in the cytoplasm. It carries out the reaction GTP + H2O = GDP + phosphate + H(+). Functionally, GTP hydrolase that promotes the GTP-dependent binding of aminoacyl-tRNA to the A-site of ribosomes during protein biosynthesis. This chain is Elongation factor Tu 2, found in Syntrophomonas wolfei subsp. wolfei (strain DSM 2245B / Goettingen).